Here is an 86-residue protein sequence, read N- to C-terminus: Putative defensin-like protein 234 (86 aa).

The signal sequence occupies residues 1 to 26; the sequence is MRSATLLLVSCVLLSFILGNVKEVEA. Disulfide bonds link cysteine 34-cysteine 86, cysteine 44-cysteine 71, cysteine 52-cysteine 80, and cysteine 69-cysteine 82.

Belongs to the DEFL family.

It is found in the secreted. The polypeptide is Putative defensin-like protein 234 (SCRL14) (Arabidopsis thaliana (Mouse-ear cress)).